Consider the following 185-residue polypeptide: Ribosome-recycling factor (185 aa).

This sequence belongs to the RRF family.

The protein resides in the cytoplasm. In terms of biological role, responsible for the release of ribosomes from messenger RNA at the termination of protein biosynthesis. May increase the efficiency of translation by recycling ribosomes from one round of translation to another. This Bacillus pumilus (strain SAFR-032) protein is Ribosome-recycling factor.